The primary structure comprises 273 residues: Chlorophyll a-b binding protein 8, chloroplastic (273 aa).

A chloroplast-targeting transit peptide spans 1–32; the sequence is MATQALISSSSISTSAEAARQIIGSRISQSVT. Arg33 is modified (N2-acetylarginine). Chlorophyll b is bound at residue Trp56. Chlorophyll a is bound by residues Phe76, Ser82, and Glu100. Arg105 is a binding site for chlorophyll b. Residues 106–126 traverse the membrane as a helical segment; it reads FAMLGAAGAIAPEILGKAGLI. Chlorophyll b-binding residues include Ile140, Glu167, and Arg170. Lys224, Glu225, Asn228, Arg230, Gln242, and His257 together coordinate chlorophyll a. A helical membrane pass occupies residues 231 to 251; sequence LAMLAILGYFIQALVTGVGPY.

It belongs to the light-harvesting chlorophyll a/b-binding (LHC) protein family. As to quaternary structure, the LHC complex consists of chlorophyll a-b binding proteins. Binds at least 14 chlorophylls (8 Chl-a and 6 Chl-b) and carotenoids such as lutein and neoxanthin. is required as a cofactor. Photoregulated by reversible phosphorylation of its threonine residues.

The protein localises to the plastid. Its subcellular location is the chloroplast thylakoid membrane. In terms of biological role, the light-harvesting complex (LHC) functions as a light receptor, it captures and delivers excitation energy to photosystems with which it is closely associated. The chain is Chlorophyll a-b binding protein 8, chloroplastic (CAB8) from Solanum lycopersicum (Tomato).